The chain runs to 1222 residues: MLFNINEKGEPLVISFAPFLSPEAIKHLQENERCSDQSQKRTAQQIEAIYTSGQNILVSASAGSGKTFVMVERILDKILRGVSIDRLFISTFTVKAATELRERIENKLYSQIAQTTDFQMKVYLTEQLQSLGQADIGTMDAFAQKVVSRYGYSIGISSQFRIMQDKAEQDVLKQEVFSKLFSEFMNQKEAPVFRALVKNFSGNCKDTSAFRELVYTCYSFSQSTENPKIWLQENFLSAAKTYQRLEDIPDHDIELLLLAMQDTANQLRDVTDMEDYGQLTKAGSRSAKYTKHLTIIEKLSDWVRDFKCLYGKAGLDRLIRDVTGLIPSGNDVTVSKVKYPVFKTLHQKLKQFRHLETILMYQKDCFPLLEQLQDFVLAFSEAYLAVKIQESAFEFSDITHFAIKILEENTDIRQSYQQHYHEVMVDEYQDNNHMQERLLTLLSNGHNRFMVGDIKQSIYRFRQADPQIFNQKFRDYQKKTEQGKVILLKENFRSQSEVLNVSNAVFSHLMDESVGDVLYDEQHQLIAGSHAQTVPYLDRRAQLLLYNSDKDDGNAPSDSEGISFSEVTIVAKEIIKLHNDKGVPFEDITLLVSSRTRNDIISHTFNQYGIPIVTDGGQQNYLKSVEVMVMLDTLRTINNPRNDYALVALLRSPMFAFDEDDLARIALQKDNELDKDCLYDKIQRAVIGRGAHPELIHDTLLGKLNIFLKTLKSWRRYAKLGSLYDLIWKIFNDRFYFDFVASQAKAEQAQANLYALALRANQFEKSGYKGLYCFIKMIDKVLETQNDLADVEVAAPKQAVNLMTIHKSKGLQFPYVFILNCDKRFSMTDIHKSFILNRQHGIGIKYLADIKVLLGETTLNSVKVSMETLPYQLNKQELRLATLSEQMRLLYVAMTRAEKKVYFIGKASKSKSQDITDPKKLGKLLPLALREQLLTFQDWLLAIADVFSTEDLYFDVRFIEDSDLTQESVGRLQTPQLLNPDDLKDNRQSETIARALDMLEAVSQLNANYEAAIHLPTVRTPSQLKAAYEPLLEPIGVDIIEKSSRSLSDFTLPHFSKKVKVEASHIGSALHQLMQVLPLSKPINQQTLLDALREIDSNEEVKTALDLKKIESFFCDTSLGQFFQTYQKHLYREAPFAILKVDPISQEEYVLRGIIDAYFLFDDHIVLVDYKTDKYKQPIELKKRYQQQLELYAEALTQTYKLPVTKRYLVLMGGGKPEIVEV.

Residues 39 to 495 (QKRTAQQIEA…ILLKENFRSQ (457 aa)) enclose the UvrD-like helicase ATP-binding domain. Residue 60 to 67 (ASAGSGKT) participates in ATP binding. A UvrD-like helicase C-terminal domain is found at 524 to 810 (QLIAGSHAQT…NLMTIHKSKG (287 aa)).

This sequence belongs to the helicase family. AddA subfamily. As to quaternary structure, heterodimer of AddA and AddB/RexB. Mg(2+) serves as cofactor.

The catalysed reaction is Couples ATP hydrolysis with the unwinding of duplex DNA by translocating in the 3'-5' direction.. It catalyses the reaction ATP + H2O = ADP + phosphate + H(+). The heterodimer acts as both an ATP-dependent DNA helicase and an ATP-dependent, dual-direction single-stranded exonuclease. Recognizes the chi site generating a DNA molecule suitable for the initiation of homologous recombination. The AddA nuclease domain is required for chi fragment generation; this subunit has the helicase and 3' -&gt; 5' nuclease activities. This Streptococcus pyogenes serotype M12 (strain MGAS2096) protein is ATP-dependent helicase/nuclease subunit A.